The primary structure comprises 409 residues: Arginine biosynthesis bifunctional protein ArgJ (409 aa).

Residues Thr157, Lys183, Thr194, Glu281, Asn404, and Ser409 each coordinate substrate. Thr194 functions as the Nucleophile in the catalytic mechanism.

This sequence belongs to the ArgJ family. As to quaternary structure, heterotetramer of two alpha and two beta chains.

The protein localises to the cytoplasm. The enzyme catalyses N(2)-acetyl-L-ornithine + L-glutamate = N-acetyl-L-glutamate + L-ornithine. It catalyses the reaction L-glutamate + acetyl-CoA = N-acetyl-L-glutamate + CoA + H(+). Its pathway is amino-acid biosynthesis; L-arginine biosynthesis; L-ornithine and N-acetyl-L-glutamate from L-glutamate and N(2)-acetyl-L-ornithine (cyclic): step 1/1. The protein operates within amino-acid biosynthesis; L-arginine biosynthesis; N(2)-acetyl-L-ornithine from L-glutamate: step 1/4. Its function is as follows. Catalyzes two activities which are involved in the cyclic version of arginine biosynthesis: the synthesis of N-acetylglutamate from glutamate and acetyl-CoA as the acetyl donor, and of ornithine by transacetylation between N(2)-acetylornithine and glutamate. This Zymomonas mobilis subsp. mobilis (strain ATCC 31821 / ZM4 / CP4) protein is Arginine biosynthesis bifunctional protein ArgJ.